The primary structure comprises 102 residues: Cytochrome c (102 aa).

Position 1 is an N-acetylglycine (glycine 1). The segment covering 1-11 (GDAERGKKLFE) has biased composition (basic and acidic residues). The interval 1-26 (GDAERGKKLFESRAGQCHSSQKGVNS) is disordered. Positions 17, 18, and 79 each coordinate heme c. A compositionally biased stretch (polar residues) spans 17-26 (CHSSQKGVNS). Lysine 85 is subject to N6,N6,N6-trimethyllysine.

Belongs to the cytochrome c family. Binds 1 heme c group covalently per subunit.

It is found in the mitochondrion intermembrane space. In terms of biological role, electron carrier protein. The oxidized form of the cytochrome c heme group can accept an electron from the heme group of the cytochrome c1 subunit of cytochrome reductase. Cytochrome c then transfers this electron to the cytochrome oxidase complex, the final protein carrier in the mitochondrial electron-transport chain. This is Cytochrome c from Euglena viridis (Cercaria viridis).